A 428-amino-acid chain; its full sequence is Immunoglobulin superfamily containing leucine-rich repeat protein (428 aa).

The signal sequence occupies residues 1-18 (MQELHLLWWALLLGLAQA). The region spanning 19–50 (CPEPCDCGEKYGFQIADCAYRDLESVPPGFPA) is the LRRNT domain. The N-linked (GlcNAc...) asparagine glycan is linked to N51. 5 LRR repeats span residues 51–72 (NVTT…AFRE), 75–96 (LLQS…ALAS), 99–122 (HLKS…HNLS), 123–144 (ALQL…AFRS), and 147–168 (ALRS…TFTP). An LRRCT domain is found at 180-231 (NPFDCTCGIVWLKTWALTTAVSIPEQDNIACTSPHVLKGTPLSRLPPLPCSA). The Ig-like domain occupies 232–343 (PSVQLSYQPS…GSAESSVDVA (112 aa)). C257 and C327 are joined by a disulfide. N-linked (GlcNAc...) asparagine glycosylation occurs at N309.

Expressed in various tissues including retina, heart, skeletal muscle, prostate, ovary, small intestine, thyroid, adrenal cortex, testis, stomach and spinal cord.

The protein localises to the secreted. The sequence is that of Immunoglobulin superfamily containing leucine-rich repeat protein (ISLR) from Homo sapiens (Human).